We begin with the raw amino-acid sequence, 345 residues long: Phosphoribosylformylglycinamidine cyclo-ligase (345 aa).

This sequence belongs to the AIR synthase family. Homodimer.

It localises to the cytoplasm. It carries out the reaction 2-formamido-N(1)-(5-O-phospho-beta-D-ribosyl)acetamidine + ATP = 5-amino-1-(5-phospho-beta-D-ribosyl)imidazole + ADP + phosphate + H(+). The protein operates within purine metabolism; IMP biosynthesis via de novo pathway; 5-amino-1-(5-phospho-D-ribosyl)imidazole from N(2)-formyl-N(1)-(5-phospho-D-ribosyl)glycinamide: step 2/2. This is Phosphoribosylformylglycinamidine cyclo-ligase from Escherichia coli O157:H7.